Here is a 312-residue protein sequence, read N- to C-terminus: Pantothenate kinase (312 aa).

92 to 99 contacts ATP; it reads GSVAVGKS.

It belongs to the prokaryotic pantothenate kinase family.

The protein localises to the cytoplasm. It carries out the reaction (R)-pantothenate + ATP = (R)-4'-phosphopantothenate + ADP + H(+). It participates in cofactor biosynthesis; coenzyme A biosynthesis; CoA from (R)-pantothenate: step 1/5. This Vibrio cholerae serotype O1 (strain ATCC 39315 / El Tor Inaba N16961) protein is Pantothenate kinase (coaA).